The sequence spans 163 residues: uncharacterized protein (163 aa).

It belongs to the IMPDH/GMPR family.

This is an uncharacterized protein from Haemophilus influenzae (strain ATCC 51907 / DSM 11121 / KW20 / Rd).